The following is a 334-amino-acid chain: GTP 3',8-cyclase (334 aa).

The 227-residue stretch at 13-239 folds into the Radical SAM core domain; sequence KFHRKFYYLR…KVRSHHDGPA (227 aa). Arginine 22 is a GTP binding site. [4Fe-4S] cluster-binding residues include cysteine 29 and cysteine 33. Tyrosine 35 contacts S-adenosyl-L-methionine. Cysteine 36 is a binding site for [4Fe-4S] cluster. Arginine 73 is a GTP binding site. Glycine 77 serves as a coordination point for S-adenosyl-L-methionine. Position 104 (threonine 104) interacts with GTP. Serine 128 is a binding site for S-adenosyl-L-methionine. Residue lysine 165 coordinates GTP. Methionine 199 lines the S-adenosyl-L-methionine pocket. [4Fe-4S] cluster contacts are provided by cysteine 262 and cysteine 265. GTP is bound at residue 267 to 269; the sequence is RLR. [4Fe-4S] cluster is bound at residue cysteine 279.

Belongs to the radical SAM superfamily. MoaA family. In terms of assembly, monomer and homodimer. Requires [4Fe-4S] cluster as cofactor.

The catalysed reaction is GTP + AH2 + S-adenosyl-L-methionine = (8S)-3',8-cyclo-7,8-dihydroguanosine 5'-triphosphate + 5'-deoxyadenosine + L-methionine + A + H(+). Its pathway is cofactor biosynthesis; molybdopterin biosynthesis. In terms of biological role, catalyzes the cyclization of GTP to (8S)-3',8-cyclo-7,8-dihydroguanosine 5'-triphosphate. This is GTP 3',8-cyclase from Vibrio parahaemolyticus serotype O3:K6 (strain RIMD 2210633).